The following is a 394-amino-acid chain: NAD(P)H-quinone oxidoreductase subunit H (394 aa).

It belongs to the complex I 49 kDa subunit family. In terms of assembly, NDH-1 can be composed of about 15 different subunits; different subcomplexes with different compositions have been identified which probably have different functions.

It localises to the cellular thylakoid membrane. The enzyme catalyses a plastoquinone + NADH + (n+1) H(+)(in) = a plastoquinol + NAD(+) + n H(+)(out). It catalyses the reaction a plastoquinone + NADPH + (n+1) H(+)(in) = a plastoquinol + NADP(+) + n H(+)(out). In terms of biological role, NDH-1 shuttles electrons from an unknown electron donor, via FMN and iron-sulfur (Fe-S) centers, to quinones in the respiratory and/or the photosynthetic chain. The immediate electron acceptor for the enzyme in this species is believed to be plastoquinone. Couples the redox reaction to proton translocation, and thus conserves the redox energy in a proton gradient. Cyanobacterial NDH-1 also plays a role in inorganic carbon-concentration. In Prochlorococcus marinus (strain MIT 9211), this protein is NAD(P)H-quinone oxidoreductase subunit H.